The chain runs to 424 residues: MQMAGRGANRRGQHRSPVLVRPPDAEWSMRTFGVEEELLIVDPVTGEPLALADALLAGQDEPTSGLSHELKLEQIETQTRPCHSYGELLQQIRRGRAMANQAARQHGARVAAIATSPLASNTHTTPDPRYAAMLDRFGIIATEQLTCGFHVHTSVESPEEGVVVLDHIRDKLAVLTALTANSPYWRGLPTGFDSYRTQAWNRWPTSGPSSVFGSLTAYRRIVKRLLETGVIMDEGMIYFDARISRNHPTVEVRVADVCLRAEDAALMAVLVRALVETASLEMLDGVEPTAVPTALLRMASWQASNSGLRGDLLDFGDFLPQPAADVVWALVDYLSPVLDDQGELELVKAGISDVLDRGNGAHEQRETAVRYNKRQHDGQTQPGSPPTNEALAAVVGHAAKVTVRGAAADAHKDPAPMLTRVRRP.

Disordered stretches follow at residues 1–20 and 405–424; these read MQMAGRGANRRGQHRSPVLV and GAAADAHKDPAPMLTRVRRP.

It belongs to the glutamate--cysteine ligase type 2 family. YbdK subfamily.

It catalyses the reaction L-cysteine + L-glutamate + ATP = gamma-L-glutamyl-L-cysteine + ADP + phosphate + H(+). Its function is as follows. ATP-dependent carboxylate-amine ligase which exhibits weak glutamate--cysteine ligase activity. This chain is Putative glutamate--cysteine ligase 2-3, found in Paenarthrobacter aurescens (strain TC1).